Here is a 150-residue protein sequence, read N- to C-terminus: Large ribosomal subunit protein bL9 (150 aa).

This sequence belongs to the bacterial ribosomal protein bL9 family.

Functionally, binds to the 23S rRNA. The protein is Large ribosomal subunit protein bL9 of Burkholderia vietnamiensis (strain G4 / LMG 22486) (Burkholderia cepacia (strain R1808)).